A 249-amino-acid polypeptide reads, in one-letter code: Proteasome subunit alpha type-3 (249 aa).

The protein belongs to the peptidase T1A family. The 26S proteasome consists of a 20S proteasome core and two 19S regulatory subunits. The 20S proteasome core is composed of 28 subunits that are arranged in four stacked rings, resulting in a barrel-shaped structure. The two end rings are each formed by seven alpha subunits, and the two central rings are each formed by seven beta subunits. The catalytic chamber with the active sites is on the inside of the barrel.

It localises to the cytoplasm. The protein localises to the nucleus. The proteasome is a multicatalytic proteinase complex which is characterized by its ability to cleave peptides with Arg, Phe, Tyr, Leu, and Glu adjacent to the leaving group at neutral or slightly basic pH. The proteasome has an ATP-dependent proteolytic activity. The protein is Proteasome subunit alpha type-3 (PAG1) of Spinacia oleracea (Spinach).